The primary structure comprises 297 residues: MKYSIKAPAKINLSLDVIRKREDGYHEVEMIMTMVDLADRVDLSLRADGGISIDVSEGFVPSDERNFAYQAASLLKKRYNVREGVHIYITKRIPVAAGLAGGSSDAAATLKGLNELWQLGLSVDELATLGAEIGSDVSFCVYGGTALATGRGELIKPIASPPPLWVILAKPPIGLSTADVYNGLKLSEARHAKTAEMIAALERQDAASICALLHNTLEDVTLRLYPEVAHIKEQMKRFGANGVLMSGSGPTVFGIVEKESRVNRIYNGLRGFCDEVYAVRLIRTSGTCPNTDENGML.

K10 is an active-site residue. An ATP-binding site is contributed by 94–104 (PVAAGLAGGSS). D136 is a catalytic residue.

Belongs to the GHMP kinase family. IspE subfamily.

It carries out the reaction 4-CDP-2-C-methyl-D-erythritol + ATP = 4-CDP-2-C-methyl-D-erythritol 2-phosphate + ADP + H(+). It functions in the pathway isoprenoid biosynthesis; isopentenyl diphosphate biosynthesis via DXP pathway; isopentenyl diphosphate from 1-deoxy-D-xylulose 5-phosphate: step 3/6. Catalyzes the phosphorylation of the position 2 hydroxy group of 4-diphosphocytidyl-2C-methyl-D-erythritol. This is 4-diphosphocytidyl-2-C-methyl-D-erythritol kinase from Shouchella clausii (strain KSM-K16) (Alkalihalobacillus clausii).